The chain runs to 652 residues: DNA ligase (652 aa).

NAD(+) is bound by residues 29–33, 78–79, and glutamate 107; these read DSDYD and SL. Lysine 109 serves as the catalytic N6-AMP-lysine intermediate. NAD(+) is bound by residues arginine 130, glutamate 164, lysine 278, and lysine 302. Zn(2+)-binding residues include cysteine 395, cysteine 398, cysteine 413, and cysteine 418. One can recognise a BRCT domain in the interval 577-652; the sequence is NSDAALFGLT…IEDEDWLRKL (76 aa).

This sequence belongs to the NAD-dependent DNA ligase family. LigA subfamily. It depends on Mg(2+) as a cofactor. Requires Mn(2+) as cofactor.

It carries out the reaction NAD(+) + (deoxyribonucleotide)n-3'-hydroxyl + 5'-phospho-(deoxyribonucleotide)m = (deoxyribonucleotide)n+m + AMP + beta-nicotinamide D-nucleotide.. DNA ligase that catalyzes the formation of phosphodiester linkages between 5'-phosphoryl and 3'-hydroxyl groups in double-stranded DNA using NAD as a coenzyme and as the energy source for the reaction. It is essential for DNA replication and repair of damaged DNA. The chain is DNA ligase from Streptococcus pyogenes serotype M18 (strain MGAS8232).